We begin with the raw amino-acid sequence, 70 residues long: Small ribosomal subunit protein bS21 (70 aa).

The protein belongs to the bacterial ribosomal protein bS21 family.

The sequence is that of Small ribosomal subunit protein bS21 (rpsU) from Helicobacter pylori (strain J99 / ATCC 700824) (Campylobacter pylori J99).